Reading from the N-terminus, the 63-residue chain is Small ribosomal subunit protein bS21 (63 aa).

This sequence belongs to the bacterial ribosomal protein bS21 family.

This Phocaeicola vulgatus (strain ATCC 8482 / DSM 1447 / JCM 5826 / CCUG 4940 / NBRC 14291 / NCTC 11154) (Bacteroides vulgatus) protein is Small ribosomal subunit protein bS21.